The sequence spans 462 residues: Cleavage and polyadenylation specificity factor subunit 7 (462 aa).

Disordered regions lie at residues 34–68 (VLTA…NKTP) and 161–213 (TRQN…PSVL). Residues 50–62 (EPPPPVRQEPAPK) show a composition bias toward pro residues. Positions 82–162 (AAVYVGSFSW…EKVDVRPATR (81 aa)) constitute an RRM domain. The span at 181-190 (HSRDSSDSAD) shows a compositional bias: basic and acidic residues. The residue at position 194 (threonine 194) is a Phosphothreonine. The residue at position 196 (serine 196) is a Phosphoserine. Residue lysine 345 forms a Glycyl lysine isopeptide (Lys-Gly) (interchain with G-Cter in SUMO2) linkage. The tract at residues 400 to 462 (SVGASGSSSR…HRDRERDRHH (63 aa)) is disordered. 2 positions are modified to phosphoserine: serine 404 and serine 414. Positions 409 to 460 (RKRHRSRERSPSRSRESSRRHRDLLHNEDRHDDYFQERNREHERHRDRERDR) are arg/Ser-rich domain. Composition is skewed to basic and acidic residues over residues 416–425 (ERSPSRSRES) and 432–462 (LLHN…DRHH).

This sequence belongs to the RRM CPSF6/7 family. As to quaternary structure, component of the cleavage factor Im (CFIm) complex which is a heterotetramer composed of two subunits of NUDT21/CPSF5 and two subunits of CPSF6 or CPSF7 or a heterodimer of CPSF6 and CPSF7. The cleavage factor Im (CFIm) complex associates with the CPSF and CSTF complexes to promote the assembly of the core mRNA 3'-processing machinery. Interacts with NUDT21/CPSF5. Interacts (via Arg/Ser-rich domain) with FIP1L1 (preferentially via unphosphorylated form and Arg/Glu/Asp-rich region); this interaction mediates, at least in part, the interaction between the CFIm and CPSF complexes and may be inhibited by CPSF7 hyper-phosphorylation. Phosphorylated. In terms of processing, asymmetrically dimethylated on arginine residues by PRMT1.

It localises to the nucleus. It is found in the cytoplasm. Component of the cleavage factor Im (CFIm) complex that functions as an activator of the pre-mRNA 3'-end cleavage and polyadenylation processing required for the maturation of pre-mRNA into functional mRNAs. CFIm contributes to the recruitment of multiprotein complexes on specific sequences on the pre-mRNA 3'-end, so called cleavage and polyadenylation signals (pA signals). Most pre-mRNAs contain multiple pA signals, resulting in alternative cleavage and polyadenylation (APA) producing mRNAs with variable 3'-end formation. The CFIm complex acts as a key regulator of cleavage and polyadenylation site choice during APA through its binding to 5'-UGUA-3' elements localized in the 3'-untranslated region (UTR) for a huge number of pre-mRNAs. CPSF7 activates directly the mRNA 3'-processing machinery. Binds to pA signals in RNA substrates. In Rattus norvegicus (Rat), this protein is Cleavage and polyadenylation specificity factor subunit 7.